The chain runs to 143 residues: Transcriptional regulator MraZ (143 aa).

SpoVT-AbrB domains follow at residues threonine 5–valine 47 and alanine 76–serine 119.

Belongs to the MraZ family. As to quaternary structure, forms oligomers.

It localises to the cytoplasm. It is found in the nucleoid. This is Transcriptional regulator MraZ from Corynebacterium kroppenstedtii (strain DSM 44385 / JCM 11950 / CIP 105744 / CCUG 35717).